The primary structure comprises 670 residues: DNA ligase (670 aa).

NAD(+) contacts are provided by residues 33 to 37, 82 to 83, and Glu114; these read DAEYD and SL. Lys116 acts as the N6-AMP-lysine intermediate in catalysis. The NAD(+) site is built by Arg137, Glu174, Lys291, and Lys315. Zn(2+) is bound by residues Cys409, Cys412, Cys427, and Cys433. In terms of domain architecture, BRCT spans 593 to 670; that stretch reads GAELPLEGKT…TEQDLLELIN (78 aa).

It belongs to the NAD-dependent DNA ligase family. LigA subfamily. It depends on Mg(2+) as a cofactor. Requires Mn(2+) as cofactor.

It carries out the reaction NAD(+) + (deoxyribonucleotide)n-3'-hydroxyl + 5'-phospho-(deoxyribonucleotide)m = (deoxyribonucleotide)n+m + AMP + beta-nicotinamide D-nucleotide.. In terms of biological role, DNA ligase that catalyzes the formation of phosphodiester linkages between 5'-phosphoryl and 3'-hydroxyl groups in double-stranded DNA using NAD as a coenzyme and as the energy source for the reaction. It is essential for DNA replication and repair of damaged DNA. The protein is DNA ligase of Vibrio parahaemolyticus serotype O3:K6 (strain RIMD 2210633).